The sequence spans 105 residues: Small ribosomal subunit protein uS10 (105 aa).

This sequence belongs to the universal ribosomal protein uS10 family. In terms of assembly, part of the 30S ribosomal subunit.

Its function is as follows. Involved in the binding of tRNA to the ribosomes. The protein is Small ribosomal subunit protein uS10 of Gloeothece citriformis (strain PCC 7424) (Cyanothece sp. (strain PCC 7424)).